The sequence spans 160 residues: MAETGYKQVVTPYNDDPFIGHLATPISASGFTKAFIGNLPAYRPGLAPILRGLEVGMAHGYFLGGPWVVLGPLRDSEYANIGGLIPALAMVLLATGCLASYGLVSFQGKAASNDPLKSAEGWSQFAAGFFIGGMGGAFVAYFLLENLGVVDGIMRGVFNQ.

2 helical membrane-spanning segments follow: residues 84 to 104 (LIPALAMVLLATGCLASYGLV) and 125 to 145 (FAAGFFIGGMGGAFVAYFLLE).

Belongs to the PsaL family.

Its subcellular location is the cellular thylakoid membrane. The chain is Photosystem I reaction center subunit XI from Microcystis aeruginosa (strain NIES-843 / IAM M-2473).